Here is a 435-residue protein sequence, read N- to C-terminus: Probable exopolygalacturonase B (435 aa).

The first 15 residues, 1 to 15, serve as a signal peptide directing secretion; the sequence is MKFFLATLFASAVSS. Residues Asn-59, Asn-184, and Asn-224 are each glycosylated (N-linked (GlcNAc...) asparagine). PbH1 repeat units follow at residues 208-239, 240-261, 262-283, 294-315, and 326-347; these read SKDV…DSLN, VDGL…SPKP, NTTN…SMGS, IEHA…RLKA, and INNI…VLDQ. The active-site Proton donor is Asp-254. The cysteines at positions 256 and 273 are disulfide-linked. Asn-262 and Asn-274 each carry an N-linked (GlcNAc...) asparagine glycan. Residue His-277 is part of the active site. N-linked (GlcNAc...) asparagine glycans are attached at residues Asn-301, Asn-328, Asn-365, and Asn-373. The stretch at 366–388 is one PbH1 6 repeat; that stretch reads VTNILFENISGTSSGKNGKVVAD. A disulfide bridge connects residues Cys-391 and Cys-397. N-linked (GlcNAc...) asparagine glycosylation occurs at Asn-406.

The protein belongs to the glycosyl hydrolase 28 family.

The protein resides in the secreted. It carries out the reaction [(1-&gt;4)-alpha-D-galacturonosyl](n) + H2O = alpha-D-galacturonate + [(1-&gt;4)-alpha-D-galacturonosyl](n-1). In terms of biological role, specific in hydrolyzing the terminal glycosidic bond of polygalacturonic acid and oligogalacturonates. This chain is Probable exopolygalacturonase B (pgxB), found in Aspergillus oryzae (strain ATCC 42149 / RIB 40) (Yellow koji mold).